We begin with the raw amino-acid sequence, 117 residues long: Cell division protein FtsB (117 aa).

At 1–6 (MRDWRW) the chain is on the cytoplasmic side. The helical transmembrane segment at 7–24 (MLLVLALLLGWLQYRFWF) threads the bilayer. Residues 25–117 (GPGNSGEVMM…QVGEHPADVP (93 aa)) are Periplasmic-facing. Residues 29–69 (SGEVMMLEAQVTNQERDNEGLQQRNDALAAEVKDLKEGQSA) adopt a coiled-coil conformation.

Belongs to the FtsB family. Part of a complex composed of FtsB, FtsL and FtsQ.

It is found in the cell inner membrane. Functionally, essential cell division protein. May link together the upstream cell division proteins, which are predominantly cytoplasmic, with the downstream cell division proteins, which are predominantly periplasmic. This chain is Cell division protein FtsB, found in Stenotrophomonas maltophilia (strain R551-3).